The primary structure comprises 452 residues: Phosphoglucosamine mutase (452 aa).

Residue S112 is the Phosphoserine intermediate of the active site. 4 residues coordinate Mg(2+): S112, D251, D253, and D255. Residue S112 is modified to Phosphoserine.

Belongs to the phosphohexose mutase family. The cofactor is Mg(2+). In terms of processing, activated by phosphorylation.

It carries out the reaction alpha-D-glucosamine 1-phosphate = D-glucosamine 6-phosphate. Its function is as follows. Catalyzes the conversion of glucosamine-6-phosphate to glucosamine-1-phosphate. This is Phosphoglucosamine mutase from Bordetella bronchiseptica (strain ATCC BAA-588 / NCTC 13252 / RB50) (Alcaligenes bronchisepticus).